Reading from the N-terminus, the 116-residue chain is Protein lin-52 homolog (116 aa).

Ser28 and Ser53 each carry phosphoserine.

This sequence belongs to the lin-52 family. In terms of assembly, component of the DREAM complex (also named LINC complex) at least composed of E2F4, E2F5, LIN9, LIN37, LIN52, LIN54, MYBL1, MYBL2, RBL1, RBL2, RBBP4, TFDP1 and TFDP2. The complex exists in quiescent cells where it represses cell cycle-dependent genes. It dissociates in S phase when LIN9, LIN37, LIN52 and LIN54 form a subcomplex that binds to MYBL2.

In Homo sapiens (Human), this protein is Protein lin-52 homolog (LIN52).